The sequence spans 67 residues: Prokaryotic ubiquitin-like protein Pup (67 aa).

A compositionally biased stretch (low complexity) spans 1–36; the sequence is MPQQFEQPQAQQAVTQEDDALATTQAATQTESTDQA. Residues 1–38 form a disordered region; sequence MPQQFEQPQAQQAVTQEDDALATTQAATQTESTDQADV. An ARC ATPase binding region spans residues 23–61; that stretch reads TTQAATQTESTDQADVLDDILDDIESTLETNAEEYVNSF. Glutamate 67 participates in a covalent cross-link: Isoglutamyl lysine isopeptide (Glu-Lys) (interchain with K-? in acceptor proteins).

Belongs to the prokaryotic ubiquitin-like protein family. As to quaternary structure, strongly interacts with the proteasome-associated ATPase ARC through a hydrophobic interface; the interacting region of Pup lies in its C-terminal half. There is one Pup binding site per ARC hexamer ring.

The protein operates within protein degradation; proteasomal Pup-dependent pathway. In terms of biological role, protein modifier that is covalently attached to lysine residues of substrate proteins, thereby targeting them for proteasomal degradation. The tagging system is termed pupylation. In Bifidobacterium longum subsp. infantis (strain ATCC 15697 / DSM 20088 / JCM 1222 / NCTC 11817 / S12), this protein is Prokaryotic ubiquitin-like protein Pup.